A 342-amino-acid chain; its full sequence is DNA repair protein RAD51 homolog 1 (342 aa).

The tract at residues Met-1–Gly-24 is disordered. Positions Thr-51–Ala-80 constitute a HhH domain. In terms of domain architecture, FtsK spans Gln-100–Ile-314. Gly-130 to Thr-137 contributes to the ATP binding site.

Belongs to the RecA family. RAD51 subfamily. Self-associates and interacts with XRCC3. Binds to RAD54/CHR25. Interacts with BRCA2A and BRCA2B. Can form a tripartite complex with both BRCA2B and DSS1(I). In terms of tissue distribution, detected in various tissues. Higher expression in reproductive tissues than in vegetative tissues, with the highest expression level in young flower buds. At cellular level, is expressed at low levels in flower primordia, then at higher levels in young anthers and at highest levels in both females and males meiocytes. Not detected in gametophytes.

The protein localises to the nucleus. Functionally, binds to single and double-stranded DNA and exhibits DNA-dependent ATPase activity. Unwinds duplex DNA. Component of the meiotic recombination pathway. Seems to play a role in mediating chromosome homology search, chromosome pairing and synapsis at early stages and probably chromosome crossing-over at later stages in meiosis. Probably is involved in the repair of meiotic double strand breaks (DBSs) generated by AtSPO11-1 and in homologous recombination. Its function is dispensable for vegetative growth and root mitosis. This chain is DNA repair protein RAD51 homolog 1, found in Arabidopsis thaliana (Mouse-ear cress).